Consider the following 242-residue polypeptide: Methylthioribulose-1-phosphate dehydratase (242 aa).

A disordered region spans residues 1 to 22 (MAAASGHGLELANGGDATQDKL). Substrate is bound at residue Cys97. Zn(2+)-binding residues include His115 and His117. Glu139 acts as the Proton donor/acceptor in catalysis. Residue His195 coordinates Zn(2+).

It belongs to the aldolase class II family. MtnB subfamily. Zn(2+) is required as a cofactor.

It is found in the cytoplasm. The enzyme catalyses 5-(methylsulfanyl)-D-ribulose 1-phosphate = 5-methylsulfanyl-2,3-dioxopentyl phosphate + H2O. The protein operates within amino-acid biosynthesis; L-methionine biosynthesis via salvage pathway; L-methionine from S-methyl-5-thio-alpha-D-ribose 1-phosphate: step 2/6. In terms of biological role, catalyzes the dehydration of methylthioribulose-1-phosphate (MTRu-1-P) into 2,3-diketo-5-methylthiopentyl-1-phosphate (DK-MTP-1-P). Functions in the methionine salvage pathway. May play a role in apoptosis. The chain is Methylthioribulose-1-phosphate dehydratase from Gallus gallus (Chicken).